A 551-amino-acid polypeptide reads, in one-letter code: Membrane protein insertase YidC (551 aa).

Residues 3–23 (ANHIRILLLVTIAIMFISLMG) traverse the membrane as a helical segment. The segment covering 33–47 (NTKQQTSATQNNSHY) has biased composition (polar residues). The segment at 33 to 59 (NTKQQTSATQNNSHYDNADSSTNTDVT) is disordered. Positions 50–59 (ADSSTNTDVT) are enriched in low complexity. The next 3 membrane-spanning stretches (helical) occupy residues 361-381 (LVGN…LIFY), 431-451 (LSGC…YWVL), and 504-524 (VMMF…SGLV).

This sequence belongs to the OXA1/ALB3/YidC family. Type 1 subfamily. Interacts with the Sec translocase complex via SecD. Specifically interacts with transmembrane segments of nascent integral membrane proteins during membrane integration.

It localises to the cell inner membrane. Its function is as follows. Required for the insertion and/or proper folding and/or complex formation of integral membrane proteins into the membrane. Involved in integration of membrane proteins that insert both dependently and independently of the Sec translocase complex, as well as at least some lipoproteins. Aids folding of multispanning membrane proteins. This chain is Membrane protein insertase YidC, found in Francisella tularensis subsp. mediasiatica (strain FSC147).